The following is an 889-amino-acid chain: Chitin synthase I (889 aa).

Asparagine 43 is a glycosylation site (N-linked (GlcNAc...) asparagine). Residues 94–138 are disordered; it reads GEYFDGYNQGHPPQEHQAYDDDGQPLIEDQHGYSDNPQHQTQTPA. The span at 126-137 shows a compositional bias: polar residues; the sequence is YSDNPQHQTQTP. Asparagine 199 carries an N-linked (GlcNAc...) asparagine glycan. Helical transmembrane passes span 431–451, 530–550, 560–580, 606–626, 641–661, 687–707, 716–736, 815–835, and 861–881; these read SAFGFISVLPGAFSAYRYVAL, RWLNGSFFAAIYAIAHFYEFF, LAFFVEFVFNTINMIFAWFAI, ILGVVFTWLYGVFLMTCFVLS, MVWFWAIIMIYLMFAAIFIAV, TLIISVMSTFGIWLIASIIMF, FIQYMLLTPTYTNVLNVYAFC, GVVLIWMITNFALAALVLSSA, and IVLWSVAVLSGFKFLGAMWFL.

This sequence belongs to the chitin synthase family. Class I subfamily. Expressed in hyphal bodies.

It localises to the cell membrane. It carries out the reaction [(1-&gt;4)-N-acetyl-beta-D-glucosaminyl](n) + UDP-N-acetyl-alpha-D-glucosamine = [(1-&gt;4)-N-acetyl-beta-D-glucosaminyl](n+1) + UDP + H(+). Its function is as follows. Polymerizes chitin, a structural polymer of the cell wall and septum, by transferring the sugar moiety of UDP-GlcNAc to the non-reducing end of the growing chitin polymer. Contributes to the production of conidia and the ability of fungal conidia to germinate. Not involved in fungal stress tolerances. This chain is Chitin synthase I, found in Metarhizium acridum (strain CQMa 102).